Here is a 490-residue protein sequence, read N- to C-terminus: GTPase Der (490 aa).

Residues 1–165 (MRIAILGRPN…RIRQVAEIPL (165 aa)) form the EngA-type G 1 domain. GTP-binding positions include 7-14 (GRPNVGKS), 54-58 (DTGGV), and 117-120 (NKAD). Residues 165 to 184 (LPSAEEQENTQEEEFSSKES) form a disordered region. Residues 169-178 (EEQENTQEEE) show a composition bias toward acidic residues. Residues 227–400 (LKVALIGHPN…AVDDVYTIAT (174 aa)) form the EngA-type G 2 domain. Residues 233–240 (GHPNVGKS), 280–284 (DTAGL), and 345–348 (NKWD) contribute to the GTP site. One can recognise a KH-like domain in the interval 401-485 (TKLSTSLVNK…PFDLEYKAKP (85 aa)).

This sequence belongs to the TRAFAC class TrmE-Era-EngA-EngB-Septin-like GTPase superfamily. EngA (Der) GTPase family. In terms of assembly, associates with the 50S ribosomal subunit.

GTPase that plays an essential role in the late steps of ribosome biogenesis. The polypeptide is GTPase Der (Chlamydia muridarum (strain MoPn / Nigg)).